Reading from the N-terminus, the 173-residue chain is ATP synthase subunit b (173 aa).

Residues 20 to 40 traverse the membrane as a helical segment; that stretch reads IIATLAIFLVLMFLLKKVAWG.

The protein belongs to the ATPase B chain family. F-type ATPases have 2 components, F(1) - the catalytic core - and F(0) - the membrane proton channel. F(1) has five subunits: alpha(3), beta(3), gamma(1), delta(1), epsilon(1). F(0) has three main subunits: a(1), b(2) and c(10-14). The alpha and beta chains form an alternating ring which encloses part of the gamma chain. F(1) is attached to F(0) by a central stalk formed by the gamma and epsilon chains, while a peripheral stalk is formed by the delta and b chains.

It is found in the cell membrane. In terms of biological role, f(1)F(0) ATP synthase produces ATP from ADP in the presence of a proton or sodium gradient. F-type ATPases consist of two structural domains, F(1) containing the extramembraneous catalytic core and F(0) containing the membrane proton channel, linked together by a central stalk and a peripheral stalk. During catalysis, ATP synthesis in the catalytic domain of F(1) is coupled via a rotary mechanism of the central stalk subunits to proton translocation. Functionally, component of the F(0) channel, it forms part of the peripheral stalk, linking F(1) to F(0). The protein is ATP synthase subunit b of Lysinibacillus sphaericus (strain C3-41).